The primary structure comprises 141 residues: Transmembrane protein 216 (141 aa).

The next 4 helical transmembrane spans lie at Ile15–Phe35, Leu49–Phe69, Leu82–Leu102, and Ser115–Phe135.

As to quaternary structure, part of the tectonic-like complex (also named B9 complex). Interacts with TMEM107.

It is found in the membrane. The protein localises to the cytoplasm. Its subcellular location is the cytoskeleton. The protein resides in the cilium basal body. Its function is as follows. Part of the tectonic-like complex which is required for tissue-specific ciliogenesis and may regulate ciliary membrane composition. The sequence is that of Transmembrane protein 216 (Tmem216) from Rattus norvegicus (Rat).